The primary structure comprises 458 residues: uncharacterized protein (458 aa).

This sequence belongs to the glycerate kinase type-2 family.

This is an uncharacterized protein from Caenorhabditis elegans.